The following is a 248-amino-acid chain: 1-(5-phosphoribosyl)-5-[(5-phosphoribosylamino)methylideneamino] imidazole-4-carboxamide isomerase (248 aa).

Aspartate 8 serves as the catalytic Proton acceptor. Aspartate 131 serves as the catalytic Proton donor.

It belongs to the HisA/HisF family.

It localises to the cytoplasm. It carries out the reaction 1-(5-phospho-beta-D-ribosyl)-5-[(5-phospho-beta-D-ribosylamino)methylideneamino]imidazole-4-carboxamide = 5-[(5-phospho-1-deoxy-D-ribulos-1-ylimino)methylamino]-1-(5-phospho-beta-D-ribosyl)imidazole-4-carboxamide. It functions in the pathway amino-acid biosynthesis; L-histidine biosynthesis; L-histidine from 5-phospho-alpha-D-ribose 1-diphosphate: step 4/9. This is 1-(5-phosphoribosyl)-5-[(5-phosphoribosylamino)methylideneamino] imidazole-4-carboxamide isomerase from Paracidovorax citrulli (strain AAC00-1) (Acidovorax citrulli).